We begin with the raw amino-acid sequence, 71 residues long: Lysis protein (71 aa).

A disordered region spans residues 1–24 (MQQPSQPTRESTKKPVPFQHEEYP). A helical membrane pass occupies residues 34–56 (LYVLICLAIFLSKFTNQLLASLL).

Belongs to the Leviviricetes lysis protein family.

Its subcellular location is the host cell inner membrane. It localises to the host cell outer membrane. Induces the formation of specific membrane adhesion sites between the inner and outer membranes, apparently leading to host cell lysis. Lysis may be performed via activation of host murein hydrolases. The protein is Lysis protein of Enterobacteria phage fr (Bacteriophage fr).